Here is a 131-residue protein sequence, read N- to C-terminus: Snaclec A13 (131 aa).

Disulfide bonds link C4/C15, C32/C125, and C100/C117. The 116-residue stretch at Y11–M126 folds into the C-type lectin domain.

The protein belongs to the snaclec family. Heterodimer; disulfide-linked. As to expression, expressed by the venom gland.

The protein resides in the secreted. In terms of biological role, interferes with one step of hemostasis (modulation of platelet aggregation, or coagulation cascade, for example). In Macrovipera lebetinus (Levantine viper), this protein is Snaclec A13.